The primary structure comprises 192 residues: UPF0301 protein BceJ2315_30870 (192 aa).

The protein belongs to the UPF0301 (AlgH) family.

The protein is UPF0301 protein BceJ2315_30870 of Burkholderia cenocepacia (strain ATCC BAA-245 / DSM 16553 / LMG 16656 / NCTC 13227 / J2315 / CF5610) (Burkholderia cepacia (strain J2315)).